A 107-amino-acid chain; its full sequence is UPF0060 membrane protein A1S_1909 (107 aa).

The next 4 helical transmembrane spans lie at 2-22 (FGLFIITAIAEILGCYFPYLI), 28-48 (SAWLWLPTALSLAVFVWLLTL), 56-76 (IYAAYGGIYIFTALMWLRFVD), and 85-105 (ILGGVIVLCGAGLIILQPQGL).

It belongs to the UPF0060 family.

It is found in the cell inner membrane. The chain is UPF0060 membrane protein A1S_1909 from Acinetobacter baumannii (strain ATCC 17978 / DSM 105126 / CIP 53.77 / LMG 1025 / NCDC KC755 / 5377).